We begin with the raw amino-acid sequence, 67 residues long: Large ribosomal subunit protein bL35 (67 aa).

Positions 1 to 16 are enriched in basic residues; it reads MPKMKTKSSAKKRFRV. A disordered region spans residues 1-24; sequence MPKMKTKSSAKKRFRVRPGGTVKR.

This sequence belongs to the bacterial ribosomal protein bL35 family.

This Delftia acidovorans (strain DSM 14801 / SPH-1) protein is Large ribosomal subunit protein bL35.